A 122-amino-acid chain; its full sequence is Large ribosomal subunit protein uL14 (122 aa).

It belongs to the universal ribosomal protein uL14 family. As to quaternary structure, part of the 50S ribosomal subunit. Forms a cluster with proteins L3 and L19. In the 70S ribosome, L14 and L19 interact and together make contacts with the 16S rRNA in bridges B5 and B8.

In terms of biological role, binds to 23S rRNA. Forms part of two intersubunit bridges in the 70S ribosome. The chain is Large ribosomal subunit protein uL14 from Chloroherpeton thalassium (strain ATCC 35110 / GB-78).